Consider the following 127-residue polypeptide: uncharacterized protein (127 aa).

Positions 1–46 (MEVGLSPSACLRRIKLMEQAGVIRGYTALVDPTQSESTIAVIINIT) constitute an HTH asnC-type domain.

Functionally, not known, symbiotically active. This is an uncharacterized protein from Sinorhizobium fredii (strain NBRC 101917 / NGR234).